Reading from the N-terminus, the 210-residue chain is Thymidylate kinase (210 aa).

13 to 20 (GLEGAGKS) contacts ATP.

Belongs to the thymidylate kinase family.

The catalysed reaction is dTMP + ATP = dTDP + ADP. Its function is as follows. Phosphorylation of dTMP to form dTDP in both de novo and salvage pathways of dTTP synthesis. The chain is Thymidylate kinase from Shewanella loihica (strain ATCC BAA-1088 / PV-4).